A 253-amino-acid chain; its full sequence is Phosphate import ATP-binding protein PstB (253 aa).

The ABC transporter domain maps to 5–248 (IQVRDLNAYY…PSDKRTEDYI (244 aa)). Residue 37–44 (GPSGCGKS) participates in ATP binding.

It belongs to the ABC transporter superfamily. Phosphate importer (TC 3.A.1.7) family. The complex is composed of two ATP-binding proteins (PstB), two transmembrane proteins (PstC and PstA) and a solute-binding protein (PstS).

The protein localises to the cell inner membrane. It carries out the reaction phosphate(out) + ATP + H2O = ADP + 2 phosphate(in) + H(+). Its function is as follows. Part of the ABC transporter complex PstSACB involved in phosphate import. Responsible for energy coupling to the transport system. This Koribacter versatilis (strain Ellin345) protein is Phosphate import ATP-binding protein PstB.